Consider the following 346-residue polypeptide: tRNA N6-adenosine threonylcarbamoyltransferase (346 aa).

Fe cation is bound by residues His-109, His-113, and Tyr-135. Residues 135-139 (YVSGG), Asp-167, Gly-180, Glu-184, and Asn-263 contribute to the substrate site. Asp-291 contributes to the Fe cation binding site.

The protein belongs to the KAE1 / TsaD family. In terms of assembly, monomer. Component of the KEOPS complex that consists of Kae1, Bud32, Cgi121 and Pcc1; the whole complex dimerizes. Fe(2+) is required as a cofactor.

It is found in the cytoplasm. The catalysed reaction is L-threonylcarbamoyladenylate + adenosine(37) in tRNA = N(6)-L-threonylcarbamoyladenosine(37) in tRNA + AMP + H(+). Its function is as follows. Required for the formation of a threonylcarbamoyl group on adenosine at position 37 (t(6)A37) in tRNAs that read codons beginning with adenine. Is a component of the KEOPS complex that is probably involved in the transfer of the threonylcarbamoyl moiety of threonylcarbamoyl-AMP (TC-AMP) to the N6 group of A37. Kae1 likely plays a direct catalytic role in this reaction, but requires other protein(s) of the complex to fulfill this activity. The protein is tRNA N6-adenosine threonylcarbamoyltransferase of Methanopyrus kandleri (strain AV19 / DSM 6324 / JCM 9639 / NBRC 100938).